A 59-amino-acid chain; its full sequence is Protein translocase subunit SecE (59 aa).

Residues 30–50 traverse the membrane as a helical segment; it reads ITVISTVIFFVIFFALLDTGI.

It belongs to the SecE/SEC61-gamma family. As to quaternary structure, component of the Sec protein translocase complex. Heterotrimer consisting of SecY, SecE and SecG subunits. The heterotrimers can form oligomers, although 1 heterotrimer is thought to be able to translocate proteins. Interacts with the ribosome. Interacts with SecDF, and other proteins may be involved. Interacts with SecA.

Its subcellular location is the cell membrane. Functionally, essential subunit of the Sec protein translocation channel SecYEG. Clamps together the 2 halves of SecY. May contact the channel plug during translocation. The chain is Protein translocase subunit SecE from Bacillus subtilis (strain 168).